Here is a 489-residue protein sequence, read N- to C-terminus: MSPPLVIKNGTVVNEDGMFKADVLVKNGIIVEVSPKIIALPEMEIIDATDRLVIPGGIDPHTHMQMPYAGEVTKDDFLRGTQAAVAGGTTMIIDFCCPDHRNGESLMAGYARWRSWADPKVCCDYGLSVAITQWRPETADQMAVITSPEFGVNSFKFYMAYEGTLMVRDDEMYRAMQECAKLRALARVHAENGSVIKEREIDLLAKGVTGPEGHTQSRPEEIEAEATNRACVLAAQANCPVYIVHVMTKGAAAAISHHRAQGSIVFGEPIAAGLALDGSHYYNEDWLHAARYVMSPPLSRDPTTPELLMKLLAAGELHLTGTDNCTYDGCQKSLGKGNFTKIPNGINGVEDRMSVVWEKGVHSGIIDPMRYVSITSATAAKIFNIYPKKGRIAVGSDADIVIFNPNATRTISAETHHHNLDFNIFEGIKCHGVAEITISRGRIVWANGQLQTVPGSGKFVPLLANSPFVFSSHEIREKKKEPRIVERLE.

3 residues coordinate Zn(2+): His61, His63, and Lys156. Lys156 bears the N6-carboxylysine mark. Residue Tyr161 coordinates substrate. Zn(2+) contacts are provided by His189 and His245. A substrate-binding site is contributed by Ser295. Asp323 provides a ligand contact to Zn(2+). Asn344 contributes to the substrate binding site.

The protein belongs to the metallo-dependent hydrolases superfamily. Hydantoinase/dihydropyrimidinase family. In terms of assembly, homotetramer. Requires Zn(2+) as cofactor. In terms of processing, carboxylation allows a single lysine to coordinate two zinc ions.

The protein localises to the nucleus. The catalysed reaction is 5,6-dihydrouracil + H2O = 3-(carbamoylamino)propanoate + H(+). This chain is Dihydropyrimidinase 1 (dhp-1), found in Caenorhabditis briggsae.